A 310-amino-acid chain; its full sequence is Olfactory receptor 2A7 (310 aa).

The Extracellular segment spans residues 1–24; that stretch reads MGNNMTLITEFILLGFPLSPRMQM. N-linked (GlcNAc...) asparagine glycosylation occurs at asparagine 4. The helical transmembrane segment at 25 to 45 threads the bilayer; it reads LLFALFSLFYAFTLLGNGTIV. The Cytoplasmic portion of the chain corresponds to 46–53; the sequence is GLICLDSR. The helical transmembrane segment at 54 to 74 threads the bilayer; that stretch reads LHTPMYFFLSHLAIVDIAYAC. Topologically, residues 75–96 are extracellular; that stretch reads NTVPQMLVNLLDPVKPISYAGC. A disulfide bridge links cysteine 96 with cysteine 178. A helical membrane pass occupies residues 97–117; sequence MTQTFLFLTFAITECLLLVVM. Residues 118–148 are Cytoplasmic-facing; it reads SYDRYVAICHPLRYSAIMSWRVCSTMAVTSW. A helical transmembrane segment spans residues 149–169; sequence IIGVLLSLIHLVLLLPLPFCV. The Extracellular segment spans residues 170–204; that stretch reads SQKVNHFFCEITAILKLACADTHLNETMVLAGAVS. An N-linked (GlcNAc...) asparagine glycan is attached at asparagine 194. A helical transmembrane segment spans residues 205–225; the sequence is VLVGPFSSIVVSYACILGAIL. Topologically, residues 226–239 are cytoplasmic; it reads KIQSEEGQRKAFST. Residues 240-260 traverse the membrane as a helical segment; the sequence is CSSHLCVVGLFYGTAIVMYVG. The Extracellular portion of the chain corresponds to 261-273; it reads PRHGSPKEQKKYL. Residues 274-291 form a helical membrane-spanning segment; sequence LLFHSLFNPMLNPLIYSL. Residues 292–310 lie on the Cytoplasmic side of the membrane; that stretch reads RNSDVKNTLKRVLRTQRAL.

The protein belongs to the G-protein coupled receptor 1 family. Olfactory epithelium.

It is found in the cell membrane. In terms of biological role, odorant receptor. The polypeptide is Olfactory receptor 2A7 (Mus musculus (Mouse)).